The primary structure comprises 241 residues: MNIKDIGVIIAKKPLKENTFIITVFTKNHGLYSGVAKESSKKSKFIYQEGNVVDFLWQARLHEHIGIAKCELVKSYIGHFIINKAKLYAFNSVISLIKELFHEREEHYNFFSLLINYLDNLAKNFCFHDYINFELALLAEMGYELDFTKCGVSNTTQDLAYLSPKSGRAVSYEVGAPYKDKLLPLPKFLLSGNDKITLEEKRQALNLTSYFFNRYLFHNHRQPEIRQVFVEYILEKDAITA.

It belongs to the RecO family.

Its function is as follows. Involved in DNA repair and RecF pathway recombination. The chain is DNA repair protein RecO from Rickettsia bellii (strain OSU 85-389).